Reading from the N-terminus, the 718-residue chain is Probable trehalose-phosphatase (718 aa).

The disordered stretch occupies residues 449–470; it reads LSMDQTGHKKVDAKKKPGIRKK. Over residues 459 to 470 the composition is skewed to basic residues; that stretch reads VDAKKKPGIRKK.

It in the N-terminal section; belongs to the glycosyltransferase 20 family. In the C-terminal section; belongs to the trehalose phosphatase family.

It catalyses the reaction alpha,alpha-trehalose 6-phosphate + H2O = alpha,alpha-trehalose + phosphate. The polypeptide is Probable trehalose-phosphatase (Encephalitozoon cuniculi (strain GB-M1) (Microsporidian parasite)).